The following is a 451-amino-acid chain: Phenolic glucoside malonyltransferase 2 (451 aa).

His165 serves as the catalytic Proton acceptor. An HXXXD motif motif is present at residues 165–169; sequence HAVLD. Residues His270 and 272–273 each bind malonyl-CoA; that span reads ST. Asp395 serves as the catalytic Proton acceptor. Residues 395 to 399 carry the DFGWG motif motif; that stretch reads DFGWG.

The protein belongs to the plant acyltransferase family. Phenolic glucoside malonyltransferase subfamily.

It catalyses the reaction a flavonol 7-O-beta-D-glucoside + malonyl-CoA = a flavonol 7-O-(6-O-malonyl-beta-D-glucoside) + CoA. Its function is as follows. Malonyltransferase acting on xenobiotic glucosides. Has activity toward 2-Naphthol glucoside (2NAG), 1-Naphthol glucoside (1NAG), kaempferol 7-O-glucoside, hydroxycoumarin glucosides and phenol-glucosides, but not toward kaempferol 3-O-glucoside or daidzin. Prefers phenol glucosides rather than naphtol glucosides. In vivo, seems to be involved in the malonylation of 4-methylumbelliferone glucoside or 4-nitrophenyl glucoside while PMAT1 would be involved in the malonylation of 2-Naphthol glucoside. The chain is Phenolic glucoside malonyltransferase 2 (PMAT2) from Arabidopsis thaliana (Mouse-ear cress).